We begin with the raw amino-acid sequence, 195 residues long: Myelin-associated neurite-outgrowth inhibitor (195 aa).

Methionine 1 is modified (N-acetylmethionine). The Cytoplasmic segment spans residues 1 to 18; sequence MNPVYSPGSSGVPYANAK. Serine 6 carries the post-translational modification Phosphoserine. A helical membrane pass occupies residues 19-42; the sequence is GIGYPAGFPMGYAAAAPAYSPNMY. The Extracellular portion of the chain corresponds to 43-142; it reads PGANPTFQAG…PAPLPPPRGN (100 aa). An N-linked (GlcNAc...) asparagine glycan is attached at asparagine 46. Residues 143-164 form a helical membrane-spanning segment; sequence GVTMGMVAGTTMAMSAGTLLTA. Residues 165-195 lie on the Cytoplasmic side of the membrane; it reads HSPTPVAPHPVTVPTYRAPGTPTYSYVPPQW.

It belongs to the FAM168 family. In terms of assembly, may form homodimers. May interact with DAZAP2, FAM168A, PRDX6, RBM6, TMTC1 and YPEL2. Interacts with CDC27. Post-translationally, N-glycosylated.

The protein localises to the cytoplasm. It localises to the perinuclear region. It is found in the cell membrane. Its subcellular location is the cell projection. The protein resides in the axon. In terms of biological role, inhibitor of neuronal axonal outgrowth. Acts as a negative regulator of CDC42 and STAT3 and a positive regulator of STMN2. Positive regulator of CDC27. This Bos taurus (Bovine) protein is Myelin-associated neurite-outgrowth inhibitor (FAM168B).